Reading from the N-terminus, the 105-residue chain is Small ribosomal subunit protein uS10 (105 aa).

The protein belongs to the universal ribosomal protein uS10 family. As to quaternary structure, part of the 30S ribosomal subunit.

Its function is as follows. Involved in the binding of tRNA to the ribosomes. The protein is Small ribosomal subunit protein uS10 of Synechococcus elongatus (strain ATCC 33912 / PCC 7942 / FACHB-805) (Anacystis nidulans R2).